We begin with the raw amino-acid sequence, 360 residues long: Peptide chain release factor 1 (360 aa).

Q235 bears the N5-methylglutamine mark.

This sequence belongs to the prokaryotic/mitochondrial release factor family. Post-translationally, methylated by PrmC. Methylation increases the termination efficiency of RF1.

Its subcellular location is the cytoplasm. Peptide chain release factor 1 directs the termination of translation in response to the peptide chain termination codons UAG and UAA. This is Peptide chain release factor 1 from Blochmanniella pennsylvanica (strain BPEN).